The following is a 168-amino-acid chain: Peptide deformylase 1 (168 aa).

Residues C91 and H133 each coordinate Fe cation. The active site involves E134. H137 serves as a coordination point for Fe cation.

The protein belongs to the polypeptide deformylase family. Requires Fe(2+) as cofactor.

It carries out the reaction N-terminal N-formyl-L-methionyl-[peptide] + H2O = N-terminal L-methionyl-[peptide] + formate. In terms of biological role, removes the formyl group from the N-terminal Met of newly synthesized proteins. Requires at least a dipeptide for an efficient rate of reaction. N-terminal L-methionine is a prerequisite for activity but the enzyme has broad specificity at other positions. The polypeptide is Peptide deformylase 1 (Vibrio vulnificus (strain YJ016)).